The primary structure comprises 720 residues: Nucleoporin 88 (720 aa).

Residues Leu-584 to Arg-611 are a coiled coil.

Widely expressed. Higher levels of expression are detected in highly proliferative frontal regions of the embryo, e.g. brain, eye and anterior trunk.

It localises to the nucleus. Its subcellular location is the nuclear pore complex. Component of the nuclear pore complex. The chain is Nucleoporin 88 from Danio rerio (Zebrafish).